Here is a 199-residue protein sequence, read N- to C-terminus: Putative inactive ribonuclease 11 (199 aa).

The first 16 residues, 1–16 (METFPLLLLSLGLVLA), serve as a signal peptide directing secretion. N-linked (GlcNAc...) asparagine glycosylation is present at Asn-61. His-82 functions as the Proton acceptor in the catalytic mechanism. N-linked (GlcNAc...) asparagine glycosylation is found at Asn-89 and Asn-111. Cystine bridges form between Cys-98-Cys-158 and Cys-114-Cys-169. 115–119 (KWSNN) contributes to the substrate binding site.

It belongs to the pancreatic ribonuclease family.

The protein resides in the secreted. In Homo sapiens (Human), this protein is Putative inactive ribonuclease 11 (RNASE11).